Here is a 373-residue protein sequence, read N- to C-terminus: ATP phosphoribosyltransferase regulatory subunit (373 aa).

It belongs to the class-II aminoacyl-tRNA synthetase family. HisZ subfamily. As to quaternary structure, heteromultimer composed of HisG and HisZ subunits.

The protein localises to the cytoplasm. The protein operates within amino-acid biosynthesis; L-histidine biosynthesis; L-histidine from 5-phospho-alpha-D-ribose 1-diphosphate: step 1/9. In terms of biological role, required for the first step of histidine biosynthesis. May allow the feedback regulation of ATP phosphoribosyltransferase activity by histidine. The protein is ATP phosphoribosyltransferase regulatory subunit of Rhizobium johnstonii (strain DSM 114642 / LMG 32736 / 3841) (Rhizobium leguminosarum bv. viciae).